A 511-amino-acid chain; its full sequence is MTPTIKPLVLLILDGWGYREDAPDNAIAKANTPVMDRLWEKYPHCLVDGSGGAVGLPDGQMGNSEVGHVNLGAGRIVYQDFTRISKAISDRSFFSNTILCDALKKAKAAKGAVHIMGLLSAGGVHSHEDHLVAMIEMAVEQGAEDVYLHAFLDGRDTPPKSALPSIERFEALFARLGKGRFATLSGRFFAMDRDKRWERIEQSYKAVYHGLSGVTSANATDAVENAYERGETDEFVTPVVIGQPAPIANGDSVFFMNFRADRAREMTQAFVDKDFDGFDRGSRADISEFVMLTQYADTLEAPSAFPPEPLNNVLGEWLAKHDKTQLRISETEKYAHVTFFFSGGREQEFEGEKRVLIPSPKVKTYDLQPEMSSEQLTDELVAAIESQAFDVVICNYPNGDMVGHTGNFDAAVKACEAVDHSVGRVVSALEAVGGECLITADHGNAEQMSDATTGQAHTAHTNELVPFIYVGRPAKARNGRLSDVAPTILHLIGMEQPDEMTGTSLMTLEQD.

Mn(2+) is bound by residues aspartate 14 and serine 64. Catalysis depends on serine 64, which acts as the Phosphoserine intermediate. Residues histidine 125, arginine 155–aspartate 156, arginine 187, arginine 193, arginine 259–arginine 262, and lysine 333 each bind substrate. Aspartate 400, histidine 404, aspartate 441, histidine 442, and histidine 460 together coordinate Mn(2+).

Belongs to the BPG-independent phosphoglycerate mutase family. As to quaternary structure, monomer. It depends on Mn(2+) as a cofactor.

It catalyses the reaction (2R)-2-phosphoglycerate = (2R)-3-phosphoglycerate. It functions in the pathway carbohydrate degradation; glycolysis; pyruvate from D-glyceraldehyde 3-phosphate: step 3/5. Its function is as follows. Catalyzes the interconversion of 2-phosphoglycerate and 3-phosphoglycerate. This is 2,3-bisphosphoglycerate-independent phosphoglycerate mutase from Idiomarina loihiensis (strain ATCC BAA-735 / DSM 15497 / L2-TR).